The chain runs to 314 residues: Nitrilase 2 (314 aa).

Residues V7–T269 form the CN hydrolase domain. Residue E47 is the Proton acceptor of the active site. Catalysis depends on K132, which acts as the Proton donor. Catalysis depends on C166, which acts as the Nucleophile.

The protein belongs to the carbon-nitrogen hydrolase superfamily. Nitrilase family.

It catalyses the reaction a nitrile + 2 H2O = a carboxylate + NH4(+). Functionally, nitrilases catalyze the mild hydrolytic conversion of organonitriles directly to the corresponding carboxylic acids. Catalyzes the production of aryllactic acid derivatives. Mediates the hydrolysis of cyanohydrin to (S)-phenyllactic acid. This Unknown prokaryotic organism protein is Nitrilase 2.